The following is an 83-amino-acid chain: Kunitz-type serine protease inhibitor tigerin-1 (83 aa).

A signal peptide spans 1 to 24 (MSSGGLLLLLGLLTLWAELTPVSS). The 51-residue stretch at 31–81 (CELPADSGPCRGILHAFYYHPVHRTCLEFIYGGCYGNANNFKTIDECKRTC) folds into the BPTI/Kunitz inhibitor domain. Disulfide bonds link Cys-31-Cys-81, Cys-40-Cys-64, and Cys-56-Cys-77.

This sequence belongs to the venom Kunitz-type family. In terms of tissue distribution, expressed by the venom gland.

It is found in the secreted. Functionally, serine protease inhibitor. The sequence is that of Kunitz-type serine protease inhibitor tigerin-1 from Notechis scutatus scutatus (Mainland tiger snake).